A 539-amino-acid chain; its full sequence is GMP synthase [glutamine-hydrolyzing] (539 aa).

The 199-residue stretch at 4-202 (KILILDFGSQ…VLQIAGAKPD (199 aa)) folds into the Glutamine amidotransferase type-1 domain. The Nucleophile role is filled by Cys81. Residues His176 and Glu178 contribute to the active site. The GMPS ATP-PPase domain maps to 203–395 (WIMKNHIEEA…LGLPPEMVYR (193 aa)). ATP is bound at residue 230–236 (SGGVDSS).

Homodimer.

It catalyses the reaction XMP + L-glutamine + ATP + H2O = GMP + L-glutamate + AMP + diphosphate + 2 H(+). It participates in purine metabolism; GMP biosynthesis; GMP from XMP (L-Gln route): step 1/1. Catalyzes the synthesis of GMP from XMP. This Burkholderia vietnamiensis (strain G4 / LMG 22486) (Burkholderia cepacia (strain R1808)) protein is GMP synthase [glutamine-hydrolyzing].